Reading from the N-terminus, the 75-residue chain is Small ribosomal subunit protein bS16 (75 aa).

The protein belongs to the bacterial ribosomal protein bS16 family.

This chain is Small ribosomal subunit protein bS16, found in Campylobacter hominis (strain ATCC BAA-381 / DSM 21671 / CCUG 45161 / LMG 19568 / NCTC 13146 / CH001A).